An 89-amino-acid polypeptide reads, in one-letter code: Large ribosomal subunit protein bL27 (89 aa).

The segment at 1–21 is disordered; the sequence is MAHKKAGGSSRNGRDSKGKRL.

It belongs to the bacterial ribosomal protein bL27 family.

This is Large ribosomal subunit protein bL27 from Bradyrhizobium sp. (strain BTAi1 / ATCC BAA-1182).